The following is a 144-amino-acid chain: Maximins 1/H12 (144 aa).

Positions 1 to 18 (MNFKYIVAVSFLIASAYA) are cleaved as a signal peptide. Positions 19–43 (RSEENDEQSLSQRDVLEEESLREIR) are excised as a propeptide. Asn70 is subject to Asparagine amide. A propeptide spanning residues 74–123 (TAEEHEVMKRLEVVMRDLDSLDYPEEASERETRDFNQEEIANLYTKKEKR) is cleaved from the precursor. Ile143 carries the post-translational modification Isoleucine amide.

Belongs to the bombinin family. As to expression, expressed by the skin glands.

It is found in the secreted. Maximin-1 shows antibacterial activity against both Gram-positive and Gram-negative bacteria. It also shows antimicrobial activity against the fungus C.albicans, but not against A.flavus nor P.uticale. It has little hemolytic activity. It possess a significant cytotoxicity against tumor cell lines. It does not possess a significant anti-HIV activity. It shows high spermicidal activity. Its function is as follows. Maximin-H12 shows antimicrobial activity against bacteria and against the fungus C.albicans. Shows strong hemolytic activity. This Bombina maxima (Giant fire-bellied toad) protein is Maximins 1/H12.